Here is a 664-residue protein sequence, read N- to C-terminus: tRNA (carboxymethyluridine(34)-5-O)-methyltransferase ALKBH8 (664 aa).

One can recognise an RRM domain in the interval 43 to 120 (QSLVVANGGL…QKIILYLNFV (78 aa)). Residues 220-337 (KPDQMTINQY…RTSFTFRKVR (118 aa)) form the Fe2OG dioxygenase domain. 2-oxoglutarate is bound at residue 227-229 (NQY). 2 residues coordinate Fe cation: histidine 238 and aspartate 240. Zn(2+) is bound at residue histidine 242. Histidine 292 contacts Fe cation. 2-oxoglutarate contacts are provided by arginine 328 and arginine 334. The Zn(2+) site is built by cysteine 341, cysteine 343, and cysteine 349. Residues 411 to 664 (ADIGCGNGKY…GNWCVILQKA (254 aa)) are methyltransferase domain. The tract at residues 516-575 (KYLKGNRNSQGKKEEMNSDTSVQRSLVEQMPDMGSRDSASSVPRINDSQEGGCNSRQVSN) is disordered. The segment covering 552-575 (DSASSVPRINDSQEGGCNSRQVSN) has biased composition (polar residues).

It belongs to the alkB family. Interacts with TRMT112. It depends on Fe(2+) as a cofactor.

The protein localises to the cytoplasm. Its subcellular location is the nucleus. The catalysed reaction is 5-(carboxymethyl)uridine(34) in tRNA + S-adenosyl-L-methionine = 5-(2-methoxy-2-oxoethyl)uridine(34) in tRNA + S-adenosyl-L-homocysteine. Catalyzes the methylation of 5-carboxymethyl uridine to 5-methylcarboxymethyl uridine at the wobble position of the anticodon loop in tRNA via its methyltransferase domain. Catalyzes the last step in the formation of 5-methylcarboxymethyl uridine at the wobble position of the anticodon loop in target tRNA. Has a preference for tRNA(Arg) and tRNA(Glu), and does not bind tRNA(Lys). Binds tRNA and catalyzes the iron and alpha-ketoglutarate dependent hydroxylation of 5-methylcarboxymethyl uridine at the wobble position of the anticodon loop in tRNA via its dioxygenase domain, giving rise to 5-(S)-methoxycarbonylhydroxymethyluridine; has a preference for tRNA(Gly). Required for normal survival after DNA damage. May inhibit apoptosis and promote cell survival and angiogenesis. The polypeptide is tRNA (carboxymethyluridine(34)-5-O)-methyltransferase ALKBH8 (ALKBH8) (Macaca fascicularis (Crab-eating macaque)).